Reading from the N-terminus, the 295-residue chain is Polyadenylate-binding protein 2-B (295 aa).

The interval 1–102 (MAAVSSVASL…EEPGELTGDQ (102 aa)) is disordered. 2 stretches are compositionally biased toward gly residues: residues 19-31 (LRGG…GGQD) and 71-81 (GRGGSGGGAGG). Residues 83–96 (EELEDEELEEEEPG) are compositionally biased toward acidic residues. Residues 106–140 (DPELEAIKARVREMEEEAEKLKELQNEVEKQMNMS) are a coiled coil. A necessary for homooligomerization region spans residues 145-295 (NAGPVIMSVE…ARATSWYTPY (151 aa)). Residues 162 to 239 (RSIYVGNVDY…RQIKVVPKRT (78 aa)) enclose the RRM domain.

In terms of assembly, monomer and homooligomer. Binds RNA as a monomer and oligomerizes when bound to poly(A).

The protein localises to the nucleus. It localises to the cytoplasm. In terms of biological role, involved in the 3'-end formation of mRNA precursors (pre-mRNA) by the addition of a poly(A) tail of 200-250 nt to the upstream cleavage product. Stimulates poly(A) polymerase (PAPOLA) conferring processivity on the poly(A) tail elongation reaction and also controls the poly(A) tail length. Increases the affinity of poly(A) polymerase for RNA. Binds to poly(A) and to poly(G) with high affinity. May protect the poly(A) tail from degradation. This chain is Polyadenylate-binding protein 2-B (pabpn1-b), found in Xenopus laevis (African clawed frog).